Here is a 51-residue protein sequence, read N- to C-terminus: Insulin (51 aa).

Intrachain disulfides connect Cys7-Cys36, Cys19-Cys49, and Cys35-Cys40.

It belongs to the insulin family. As to quaternary structure, heterodimer of a B chain and an A chain linked by two disulfide bonds.

It is found in the secreted. Insulin decreases blood glucose concentration. It increases cell permeability to monosaccharides, amino acids and fatty acids. It accelerates glycolysis, the pentose phosphate cycle, and glycogen synthesis in liver. This Myocastor coypus (Coypu) protein is Insulin (INS).